We begin with the raw amino-acid sequence, 228 residues long: FCS-Like Zinc finger 12 (228 aa).

The segment at 162–205 adopts an FLZ-type zinc-finger fold; it reads DFLTSCCLCKKKLQGKDIYMYKGDEGFCSKECRSLKIMEDSLKE.

It belongs to the FLZ family. Interacts with KIN10 and KIN11 via its FLZ-type zinc finger domain. Interacts with KINB1 and KINB2 via its N-terminal part. Forms homodimer and heterodimer with FLZ2 and FLZ10 in vitro.

May act as an adapter to facilitate the interaction of SnRK1 complex with effector proteins, conferring tissue- and stimulus-type specific differences in the SnRK1 regulation pathway. The polypeptide is FCS-Like Zinc finger 12 (Arabidopsis thaliana (Mouse-ear cress)).